A 156-amino-acid chain; its full sequence is MGRFIFLSSGWLVVFLSLSGTGADEGCLPGWSLYEGHCYKFFFIFKTWENAEKFCQEQSNGKNLASIEWLGKANFVAELVSQALTKTKYHVWIGLRREDEKQQCSSFWTDGSSVSYENVIRYTKCVGLNKNTGHRTWIALHCGDNYPFVCMSRLPH.

The first 23 residues, 1 to 23 (MGRFIFLSSGWLVVFLSLSGTGA), serve as a signal peptide directing secretion. Cystine bridges form between Cys-27–Cys-38, Cys-55–Cys-150, and Cys-125–Cys-142. One can recognise a C-type lectin domain in the interval 34–151 (YEGHCYKFFF…CGDNYPFVCM (118 aa)).

Belongs to the snaclec family. In terms of assembly, heterodimer; disulfide-linked. Expressed by the venom gland.

Its subcellular location is the secreted. Antagonist of the alpha-2 subunit of the integrin alpha-2/beta-1 (ITGA2/ITGB1) on human platelets and endothelial cells. This protein inhibits collagen-stimulated activation of human platelets in a dose-dependent manner. In addition, it antagonizes the binding of monoclonal antibodies against the alpha-2 subunit of integrin alpha-2/beta-1 to platelets and it coimmunoprecipitates with this integrin. The chain is Snaclec rhinocetin subunit alpha from Bitis rhinoceros (West African gaboon viper).